Reading from the N-terminus, the 481-residue chain is 3-isopropylmalate dehydratase large subunit (481 aa).

[4Fe-4S] cluster-binding residues include Cys357, Cys417, and Cys420.

This sequence belongs to the aconitase/IPM isomerase family. LeuC type 1 subfamily. As to quaternary structure, heterodimer of LeuC and LeuD. The cofactor is [4Fe-4S] cluster.

The enzyme catalyses (2R,3S)-3-isopropylmalate = (2S)-2-isopropylmalate. Its pathway is amino-acid biosynthesis; L-leucine biosynthesis; L-leucine from 3-methyl-2-oxobutanoate: step 2/4. Functionally, catalyzes the isomerization between 2-isopropylmalate and 3-isopropylmalate, via the formation of 2-isopropylmaleate. The polypeptide is 3-isopropylmalate dehydratase large subunit (Mycolicibacterium vanbaalenii (strain DSM 7251 / JCM 13017 / BCRC 16820 / KCTC 9966 / NRRL B-24157 / PYR-1) (Mycobacterium vanbaalenii)).